Consider the following 37-residue polypeptide: Large ribosomal subunit protein bL36 (37 aa).

This sequence belongs to the bacterial ribosomal protein bL36 family.

This Trichodesmium erythraeum (strain IMS101) protein is Large ribosomal subunit protein bL36.